The following is a 142-amino-acid chain: MKDLFDESLTLDTGSAAPGTAPGRPRRRQPAGGKAPDTAAFLANFVRIGEIAAPKPPAAADVVSEPEEEAAVVAELIAEMRPMFQRDGGDIELIGLTGATVQVRLSGSCAGCMMSARTLSTVQHQLIETLGRPVRVVPEIRH.

The disordered stretch occupies residues 1 to 36; the sequence is MKDLFDESLTLDTGSAAPGTAPGRPRRRQPAGGKAP. The segment covering 14-23 has biased composition (low complexity); the sequence is GSAAPGTAPG.

It belongs to the NifU family.

May be involved in the formation or repair of [Fe-S] clusters present in iron-sulfur proteins. This is Nitrogen fixation protein NifU 2 (nifU2) from Rhodobacter capsulatus (Rhodopseudomonas capsulata).